Here is a 245-residue protein sequence, read N- to C-terminus: Ureidoacrylate amidohydrolase RutB (245 aa).

Aspartate 41 serves as the catalytic Proton acceptor. Lysine 150 is a catalytic residue. The active-site Nucleophile is the cysteine 183.

The protein belongs to the isochorismatase family. RutB subfamily.

It carries out the reaction (Z)-3-ureidoacrylate + H2O + H(+) = (Z)-3-aminoacrylate + NH4(+) + CO2. The catalysed reaction is (Z)-3-ureidoacrylate + H2O = (Z)-3-aminoacrylate + carbamate + H(+). The enzyme catalyses (Z)-2-methylureidoacrylate + H2O + H(+) = (Z)-2-methylaminoacrylate + NH4(+) + CO2. Its function is as follows. Hydrolyzes ureidoacrylate to form aminoacrylate and carbamate. The carbamate hydrolyzes spontaneously, thereby releasing one of the nitrogen atoms of the pyrimidine ring as ammonia and one of its carbon atoms as CO2. This is Ureidoacrylate amidohydrolase RutB from Pseudomonas savastanoi pv. phaseolicola (strain 1448A / Race 6) (Pseudomonas syringae pv. phaseolicola (strain 1448A / Race 6)).